Consider the following 141-residue polypeptide: ATP synthase epsilon chain (141 aa).

It belongs to the ATPase epsilon chain family. In terms of assembly, F-type ATPases have 2 components, CF(1) - the catalytic core - and CF(0) - the membrane proton channel. CF(1) has five subunits: alpha(3), beta(3), gamma(1), delta(1), epsilon(1). CF(0) has three main subunits: a, b and c.

Its subcellular location is the cell inner membrane. Functionally, produces ATP from ADP in the presence of a proton gradient across the membrane. The sequence is that of ATP synthase epsilon chain from Paraburkholderia phytofirmans (strain DSM 17436 / LMG 22146 / PsJN) (Burkholderia phytofirmans).